The sequence spans 265 residues: Isoprenyl transferase 1 (265 aa).

The active site involves D43. Residue D43 participates in Mg(2+) binding. Residues 44–47 (GNRR), W48, H61, and 89–91 (STE) each bind substrate. The active-site Proton acceptor is the N92. Substrate-binding positions include R95, R214, and 220 to 222 (RLS). E233 provides a ligand contact to Mg(2+).

This sequence belongs to the UPP synthase family. Homodimer. The cofactor is Mg(2+).

In terms of biological role, catalyzes the condensation of isopentenyl diphosphate (IPP) with allylic pyrophosphates generating different type of terpenoids. The protein is Isoprenyl transferase 1 of Corynebacterium diphtheriae (strain ATCC 700971 / NCTC 13129 / Biotype gravis).